The sequence spans 360 residues: sn-glycerol-3-phosphate import ATP-binding protein UgpC (360 aa).

The ABC transporter domain occupies 4–235 (LSLKGVKKSY…PATTFVASFI (232 aa)). Residue 37–44 (GPSGCGKS) coordinates ATP.

The protein belongs to the ABC transporter superfamily. sn-glycerol-3-phosphate importer (TC 3.A.1.1.3) family. As to quaternary structure, the complex is composed of two ATP-binding proteins (UgpC), two transmembrane proteins (UgpA and UgpE) and a solute-binding protein (UgpB).

Its subcellular location is the cell inner membrane. The enzyme catalyses sn-glycerol 3-phosphate(out) + ATP + H2O = sn-glycerol 3-phosphate(in) + ADP + phosphate + H(+). In terms of biological role, part of the ABC transporter complex UgpBAEC involved in sn-glycerol-3-phosphate (G3P) import. Responsible for energy coupling to the transport system. This is sn-glycerol-3-phosphate import ATP-binding protein UgpC from Burkholderia mallei (strain ATCC 23344).